The primary structure comprises 318 residues: NADH-ubiquinone oxidoreductase chain 1 (318 aa).

The next 8 membrane-spanning stretches (helical) occupy residues 2 to 22 (FMAN…FLTL), 69 to 89 (MLYL…WTPL), 98 to 118 (FNLG…SILW), 140 to 160 (ISYE…SGSF), 171 to 191 (HSWL…STLA), 222 to 242 (LFFM…TTIF), 253 to 273 (ETYS…FLWI), and 285 to 305 (LMHL…MWYI).

The protein belongs to the complex I subunit 1 family. Core subunit of respiratory chain NADH dehydrogenase (Complex I) which is composed of 45 different subunits.

The protein localises to the mitochondrion inner membrane. The catalysed reaction is a ubiquinone + NADH + 5 H(+)(in) = a ubiquinol + NAD(+) + 4 H(+)(out). Core subunit of the mitochondrial membrane respiratory chain NADH dehydrogenase (Complex I) which catalyzes electron transfer from NADH through the respiratory chain, using ubiquinone as an electron acceptor. Essential for the catalytic activity and assembly of complex I. This Saguinus leucopus (Silvery-brown bare-face tamarin) protein is NADH-ubiquinone oxidoreductase chain 1 (MT-ND1).